The following is a 283-amino-acid chain: Formamidopyrimidine-DNA glycosylase (283 aa).

Pro2 acts as the Schiff-base intermediate with DNA in catalysis. Glu3 (proton donor) is an active-site residue. Lys58 (proton donor; for beta-elimination activity) is an active-site residue. Positions 100, 119, and 162 each coordinate DNA. An FPG-type zinc finger spans residues 247–283 (DVYGREGEPCRRAGCDGTVQRITQSGRSSFYCAQCQR). Residue Arg273 is the Proton donor; for delta-elimination activity of the active site.

This sequence belongs to the FPG family. As to quaternary structure, monomer. It depends on Zn(2+) as a cofactor.

The enzyme catalyses Hydrolysis of DNA containing ring-opened 7-methylguanine residues, releasing 2,6-diamino-4-hydroxy-5-(N-methyl)formamidopyrimidine.. It catalyses the reaction 2'-deoxyribonucleotide-(2'-deoxyribose 5'-phosphate)-2'-deoxyribonucleotide-DNA = a 3'-end 2'-deoxyribonucleotide-(2,3-dehydro-2,3-deoxyribose 5'-phosphate)-DNA + a 5'-end 5'-phospho-2'-deoxyribonucleoside-DNA + H(+). Involved in base excision repair of DNA damaged by oxidation or by mutagenic agents. Acts as a DNA glycosylase that recognizes and removes damaged bases. Has a preference for oxidized purines, such as 7,8-dihydro-8-oxoguanine (8-oxoG). Has AP (apurinic/apyrimidinic) lyase activity and introduces nicks in the DNA strand. Cleaves the DNA backbone by beta-delta elimination to generate a single-strand break at the site of the removed base with both 3'- and 5'-phosphates. The protein is Formamidopyrimidine-DNA glycosylase of Ruegeria pomeroyi (strain ATCC 700808 / DSM 15171 / DSS-3) (Silicibacter pomeroyi).